We begin with the raw amino-acid sequence, 264 residues long: Short chain dehydrogenase/reductase nsrJ (264 aa).

Residues isoleucine 24, aspartate 70, asparagine 97, and arginine 130 each coordinate NADP(+). Residues serine 146 and serine 147 each act as proton donor in the active site. NADP(+) is bound by residues tyrosine 161, lysine 165, and threonine 196. Tyrosine 161 acts as the Proton acceptor in catalysis. Catalysis depends on lysine 165, which acts as the Lowers pKa of active site Tyr.

It belongs to the short-chain dehydrogenases/reductases (SDR) family.

The protein operates within secondary metabolite biosynthesis. Its function is as follows. Short chain dehydrogenase/reductase; part of the gene cluster that mediates the biosynthesis of the tetrahydroxanthone dimer neosartorin, which exhibits antibacterial activity. The two different monomeric units appear to be synthesized by the same set of enzymes, among which the Baeyer-Villiger monooxygenase nsrF is the key enzyme for the divergence of the biosynthetic routes. The pathway begins with the synthesis of atrochrysone thioester by the polyketide synthase nsrB. The atrochrysone carboxyl ACP thioesterase nsrC then breaks the thioester bond and releases the atrochrysone carboxylic acid from AacuL. Atrochrysone carboxylic acid is decarboxylated by the decarboxylase nsrE, and oxidized by the anthrone oxygenase nsrD to yield emodin. Emodin is then reduced to emodin hydroquinone by the oxidoreductase nsrR. A-ring reduction by the short chain dehydrogenase nsrJ, dehydration by the scytalone dehydratase-like protein nsrI and probable spontaneous re-oxidation, results in overall deoxygenation to chrysophanol. The Baeyer-Villiger monooxygenase nsrF accepts chrysophanol as a substrate to insert one oxygen atom at two different positions to yield the precursors of both monomric units. NsrF is promiscuous/flexible in interacting with the 2 (non methylated and methylated) aromatic rings of chrysophanol, thus diverging the biosynthetic pathway at this point. After the hydrolysis of the lactones, methylesterification by the methyltransferase nsrG yields respectively moniliphenone and 2,2',6'-trihydroxy-4-methyl-6-methoxya-cyldiphenylmethanone. The next steps are the hydroxylation by the FAD-dependent monooxygenase nsrK, followed by isomerization by the monooxygenase nsrQ. The short chain dehydrogenase/reductase nsrO then catalyzes the C-5 ketoreduction to give the xanthone skeleton of blennolide C and 5-acetylblennolide A. The acetyltransferase nsrL has a strict substrate specificity and uses only blennolide A but not blennolide C to yield 5-acetylblennolide A as the single-acetylated product. In the final step of the biosynthesis, the heterodimerization of the 2 xanthones, blennolide C and 5-acetylblennolide A, is catalyzed by the cytochrome P450 monooxygenase nsrP. NsrP can utilize at least three different xanthones as its substrates to perform the dimerization reaction. This chain is Short chain dehydrogenase/reductase nsrJ, found in Aspergillus novofumigatus (strain IBT 16806).